Consider the following 144-residue polypeptide: 6-pyruvoyl tetrahydrobiopterin synthase (144 aa).

Residues 1 to 4 (MNAA) constitute a propeptide that is removed on maturation. A Phosphoserine modification is found at serine 18. Histidine 23 is a binding site for Zn(2+). Serine 27 is subject to Phosphoserine. Cysteine 42 acts as the Proton acceptor in catalysis. The Zn(2+) site is built by histidine 48 and histidine 50. Histidine 89 (charge relay system) is an active-site residue. Tyrosine 127 is subject to Phosphotyrosine. Catalysis depends on glutamate 133, which acts as the Charge relay system.

This sequence belongs to the PTPS family. In terms of assembly, homohexamer formed of two homotrimers in a head to head fashion. The cofactor is Zn(2+). In terms of processing, phosphorylation of Ser-18 is required for maximal enzyme activity.

It carries out the reaction 7,8-dihydroneopterin 3'-triphosphate = 6-pyruvoyl-5,6,7,8-tetrahydropterin + triphosphate + H(+). It functions in the pathway cofactor biosynthesis; tetrahydrobiopterin biosynthesis; tetrahydrobiopterin from 7,8-dihydroneopterin triphosphate: step 1/3. Involved in the biosynthesis of tetrahydrobiopterin, an essential cofactor of aromatic amino acid hydroxylases. Catalyzes the transformation of 7,8-dihydroneopterin triphosphate into 6-pyruvoyl tetrahydropterin. In Rattus norvegicus (Rat), this protein is 6-pyruvoyl tetrahydrobiopterin synthase (Pts).